We begin with the raw amino-acid sequence, 184 residues long: Threonylcarbamoyl-AMP synthase (184 aa).

The YrdC-like domain occupies 3-184 (AWFIQKAVSV…DAATGAILRQ (182 aa)).

The protein belongs to the SUA5 family. TsaC subfamily.

The protein localises to the cytoplasm. The enzyme catalyses L-threonine + hydrogencarbonate + ATP = L-threonylcarbamoyladenylate + diphosphate + H2O. Functionally, required for the formation of a threonylcarbamoyl group on adenosine at position 37 (t(6)A37) in tRNAs that read codons beginning with adenine. Catalyzes the conversion of L-threonine, HCO(3)(-)/CO(2) and ATP to give threonylcarbamoyl-AMP (TC-AMP) as the acyladenylate intermediate, with the release of diphosphate. This chain is Threonylcarbamoyl-AMP synthase, found in Hahella chejuensis (strain KCTC 2396).